The sequence spans 384 residues: Beta-glucuronosyltransferase GlcAT14C (384 aa).

Residues 1-11 (MKRSHISSPRS) are Cytoplasmic-facing. A signal-anchor for type II membrane protein transmembrane segment spans residues 12–34 (YSRPAISIFGVFLLFLLVLTLSS). At 35–384 (RKPSDSSSGL…HENFRAKQCK (350 aa)) the chain is on the lumenal side. Asn-156, Asn-285, and Asn-306 each carry an N-linked (GlcNAc...) asparagine glycan.

It belongs to the glycosyltransferase 14 family.

It is found in the golgi apparatus membrane. In terms of biological role, beta-glucuronosyltransferase involved in the biosynthesis of type II arabinogalactan (AG). Modifies both the beta-1,6-linked galactan and beta-1,3-linked galactan present in type II AG. The chain is Beta-glucuronosyltransferase GlcAT14C from Arabidopsis thaliana (Mouse-ear cress).